The following is a 293-amino-acid chain: Release factor glutamine methyltransferase (293 aa).

Residues 130–134, Asp153, Trp182, and Asn199 each bind S-adenosyl-L-methionine; that span reads GTGSG. Position 199–202 (199–202) interacts with substrate; sequence NPPY.

This sequence belongs to the protein N5-glutamine methyltransferase family. PrmC subfamily.

The enzyme catalyses L-glutaminyl-[peptide chain release factor] + S-adenosyl-L-methionine = N(5)-methyl-L-glutaminyl-[peptide chain release factor] + S-adenosyl-L-homocysteine + H(+). Its function is as follows. Methylates the class 1 translation termination release factors RF1/PrfA and RF2/PrfB on the glutamine residue of the universally conserved GGQ motif. The chain is Release factor glutamine methyltransferase from Prochlorococcus marinus (strain SARG / CCMP1375 / SS120).